The following is a 2283-amino-acid chain: Serine-rich adhesin for platelets (2283 aa).

Residues 1 to 89 form the signal peptide; that stretch reads MSKRQKAFHD…VNMLHDQQAF (89 aa). The segment at 90 to 230 is serine-rich repeat region 1, SRR1; it reads AASDAPLTSE…KTSTTSTSTA (141 aa). The span at 100-111 shows a compositional bias: polar residues; that stretch reads LNTQSETVGNQN. Disordered stretches follow at residues 100–230, 691–721, and 751–2255; these read LNTQ…TSTA, NSGN…GTPT, and NSMS…GLLG. Positions 112–128 are enriched in low complexity; sequence STTIEASTSTADSTSVT. Over residues 129-140 the composition is skewed to polar residues; sequence KNSSSVQTSNSD. Positions 149 to 229 are enriched in low complexity; it reads NVTSTTNSTS…NKTSTTSTST (81 aa). Positions 231-751 are non-repeat region (NRR); that stretch reads PVKLRTFSRL…TTFKYEVTRN (521 aa). Composition is skewed to low complexity over residues 752–1323, 1330–1894, and 1901–2225; these read SMSD…SDSI, SLSA…QSSS, and DSMS…SATS. The segment at 752–2244 is serine-rich repeat region 2, SRR2; sequence SMSDSVSTSG…AQSEERLPDT (1493 aa). Residues 2241-2245 carry the LPXTG sorting signal motif; that stretch reads LPDTG. A Pentaglycyl murein peptidoglycan amidated threonine modification is found at threonine 2244. Positions 2245–2283 are cleaved as a propeptide — removed by sortase; sequence GESIKQNGLLGGIMTLLVGLGLMKRKKKKDENDQDDSQA.

Belongs to the serine-rich repeat protein (SRRP) family. In terms of processing, proteolytically cleaved by a metalloprotease. Post-translationally, glycosylated. It is probable that most of the Ser residues in SSR1 and SSR2 are O-GlcNAcylated. Sequential glycosylation by sugar transferases are able to generate complex sugar polymorphisms.

The protein localises to the secreted. It localises to the cell wall. Its function is as follows. Mediates binding to human platelets, possibly through a receptor-ligand interaction. Probably associated with virulence in endovascular infection. The chain is Serine-rich adhesin for platelets (sraP) from Staphylococcus aureus.